The following is a 355-amino-acid chain: Tetraacyldisaccharide 4'-kinase (355 aa).

ATP is bound at residue 49–56 (TAGGTGKT).

It belongs to the LpxK family.

It carries out the reaction a lipid A disaccharide + ATP = a lipid IVA + ADP + H(+). It participates in glycolipid biosynthesis; lipid IV(A) biosynthesis; lipid IV(A) from (3R)-3-hydroxytetradecanoyl-[acyl-carrier-protein] and UDP-N-acetyl-alpha-D-glucosamine: step 6/6. In terms of biological role, transfers the gamma-phosphate of ATP to the 4'-position of a tetraacyldisaccharide 1-phosphate intermediate (termed DS-1-P) to form tetraacyldisaccharide 1,4'-bis-phosphate (lipid IVA). The protein is Tetraacyldisaccharide 4'-kinase of Chlorobium luteolum (strain DSM 273 / BCRC 81028 / 2530) (Pelodictyon luteolum).